A 265-amino-acid polypeptide reads, in one-letter code: Putative hydro-lyase PA14_37210 (265 aa).

Belongs to the D-glutamate cyclase family.

In Pseudomonas aeruginosa (strain UCBPP-PA14), this protein is Putative hydro-lyase PA14_37210.